We begin with the raw amino-acid sequence, 90 residues long: Evasin P1126 (90 aa).

The N-terminal stretch at 1-25 (MTSHSAVRIAIFAVIALHSIFECLS) is a signal peptide. Cystine bridges form between Cys-46-Cys-62, Cys-50-Cys-64, and Cys-58-Cys-75. Asn-55 is a glycosylation site (N-linked (GlcNAc...) asparagine). An N-linked (GlcNAc...) asparagine glycan is attached at Asn-77.

The protein localises to the secreted. In terms of biological role, salivary chemokine-binding protein which binds to host chemokines CXCL1, CXCL2, CXCL3, CXCL4, CXCL5, CXCL6, CXCL7, CXCL10 and CXCL11. The protein is Evasin P1126 of Amblyomma cajennense (Cayenne tick).